We begin with the raw amino-acid sequence, 468 residues long: Protein CA_C1420 (468 aa).

A unknown region spans residues 1–289 (MSLNGFYLLP…LKELERIRKD (289 aa)). Residues 296-468 (QEKDPYVKLA…KFMVTRHKES (173 aa)) enclose the AMMECR1 domain.

The sequence is that of Protein CA_C1420 from Clostridium acetobutylicum (strain ATCC 824 / DSM 792 / JCM 1419 / IAM 19013 / LMG 5710 / NBRC 13948 / NRRL B-527 / VKM B-1787 / 2291 / W).